Reading from the N-terminus, the 525-residue chain is GMP synthase [glutamine-hydrolyzing] (525 aa).

The 199-residue stretch at Arg9–Leu207 folds into the Glutamine amidotransferase type-1 domain. The Nucleophile role is filled by Cys86. Residues His181 and Glu183 contribute to the active site. In terms of domain architecture, GMPS ATP-PPase spans Trp208 to Arg400. Ser235 to Ala241 contacts ATP.

In terms of assembly, homodimer.

The enzyme catalyses XMP + L-glutamine + ATP + H2O = GMP + L-glutamate + AMP + diphosphate + 2 H(+). Its pathway is purine metabolism; GMP biosynthesis; GMP from XMP (L-Gln route): step 1/1. In terms of biological role, catalyzes the synthesis of GMP from XMP. In Hamiltonella defensa subsp. Acyrthosiphon pisum (strain 5AT), this protein is GMP synthase [glutamine-hydrolyzing].